The chain runs to 303 residues: BAG family molecular chaperone regulator 3 (303 aa).

Polar residues predominate over residues 1 to 11; that stretch reads MMKMNTGTSPS. The segment at 1 to 27 is disordered; that stretch reads MMKMNTGTSPSVIGGGTSGNEWESRPG. Positions 45-119 constitute a Ubiquitin-like domain; sequence FRVRVKYGSV…LVVKEDPISQ (75 aa). The 79-residue stretch at 138–216 folds into the BAG domain; the sequence is SISDISFEVD…KYVEALDLLK (79 aa). The disordered stretch occupies residues 249–268; sequence VEEEEEEPRNSNASSSSGTP. Residues 258–267 show a composition bias toward polar residues; that stretch reads NSNASSSSGT. Position 263 is a phosphoserine (serine 263).

As to quaternary structure, binds to the ATPase domain of HSP70/HSC70 chaperones. Interacts with HSP70-1.

Functionally, co-chaperone that regulates diverse cellular pathways, such as programmed cell death and stress responses. This is BAG family molecular chaperone regulator 3 (BAG3) from Arabidopsis thaliana (Mouse-ear cress).